Consider the following 405-residue polypeptide: Mevalonate 3,5-bisphosphate decarboxylase (405 aa).

Belongs to the mevalonate 3,5-bisphosphate decarboxylase family. As to quaternary structure, homodimer.

It catalyses the reaction (R)-3,5-bisphosphomevalonate + H(+) = isopentenyl phosphate + phosphate + CO2. It functions in the pathway isoprenoid biosynthesis; isopentenyl diphosphate biosynthesis via mevalonate pathway. In terms of biological role, catalyzes the ATP-independent decarboxylation of (R)-mevalonate 3,5-bisphosphate to isopentenyl phosphate. Functions in an alternative mevalonate pathway, only present in extreme acidophiles of the Thermoplasmatales order, which passes through mevalonate 3-phosphate rather than mevalonate 5-phosphate. The protein is Mevalonate 3,5-bisphosphate decarboxylase of Thermoplasma acidophilum (strain ATCC 25905 / DSM 1728 / JCM 9062 / NBRC 15155 / AMRC-C165).